Here is a 346-residue protein sequence, read N- to C-terminus: Homeobox protein ceh-22 (346 aa).

2 disordered regions span residues 1–68 (MFNV…QSAL) and 135–190 (LPDQ…RKKR). The segment covering 9-24 (AATPSIASVSSVASPS) has biased composition (low complexity). Polar residues predominate over residues 25 to 44 (EQHGLSTSVGVGVNDTTSRT). Residues 49-67 (AASSASSASAAPQQQSQSA) show a composition bias toward low complexity. Residues 147–156 (LDNSNTSNGN) are compositionally biased toward polar residues. A compositionally biased stretch (acidic residues) spans 166-182 (EDEDEILEDEENDEEDD). Residues 189–248 (KRKRRVLFTKAQTYELERRFRSQKYLSAPEREALAMQIRLTPTQVKIWFQNHRYKTKKSH) constitute a DNA-binding region (homeobox).

It belongs to the NK-2 homeobox family.

It is found in the nucleus. In terms of biological role, involved in combinatorial activation of gene expression in pharyngeal muscle. Specifically binds a site necessary for activity of the B subelement of myo-2 enhancer. Functionally, regulates distal tip cell fate. This chain is Homeobox protein ceh-22 (ceh-22), found in Caenorhabditis elegans.